The following is a 928-amino-acid chain: Isoleucine--tRNA ligase (928 aa).

Residues 57–67 carry the 'HIGH' region motif; sequence PFANGNIHMGH. Glutamate 554 provides a ligand contact to L-isoleucyl-5'-AMP. A 'KMSKS' region motif is present at residues 595 to 599; that stretch reads KMSKS. Lysine 598 provides a ligand contact to ATP. 4 residues coordinate Zn(2+): cysteine 887, cysteine 890, cysteine 907, and cysteine 910.

Belongs to the class-I aminoacyl-tRNA synthetase family. IleS type 1 subfamily. In terms of assembly, monomer. Zn(2+) is required as a cofactor.

It is found in the cytoplasm. The catalysed reaction is tRNA(Ile) + L-isoleucine + ATP = L-isoleucyl-tRNA(Ile) + AMP + diphosphate. Catalyzes the attachment of isoleucine to tRNA(Ile). As IleRS can inadvertently accommodate and process structurally similar amino acids such as valine, to avoid such errors it has two additional distinct tRNA(Ile)-dependent editing activities. One activity is designated as 'pretransfer' editing and involves the hydrolysis of activated Val-AMP. The other activity is designated 'posttransfer' editing and involves deacylation of mischarged Val-tRNA(Ile). The sequence is that of Isoleucine--tRNA ligase from Lactobacillus johnsonii (strain CNCM I-12250 / La1 / NCC 533).